A 436-amino-acid chain; its full sequence is 3-ketoacyl-CoA thiolase (436 aa).

Cysteine 99 acts as the Acyl-thioester intermediate in catalysis. Active-site proton acceptor residues include histidine 392 and cysteine 422.

This sequence belongs to the thiolase-like superfamily. Thiolase family. As to quaternary structure, heterotetramer of two alpha chains (FadJ) and two beta chains (FadI).

It is found in the cytoplasm. The enzyme catalyses an acyl-CoA + acetyl-CoA = a 3-oxoacyl-CoA + CoA. Its pathway is lipid metabolism; fatty acid beta-oxidation. In terms of biological role, catalyzes the final step of fatty acid oxidation in which acetyl-CoA is released and the CoA ester of a fatty acid two carbons shorter is formed. The polypeptide is 3-ketoacyl-CoA thiolase (Enterobacter sp. (strain 638)).